The sequence spans 464 residues: ATP synthase subunit beta (464 aa).

Position 151-158 (151-158) interacts with ATP; the sequence is GGAGVGKT.

It belongs to the ATPase alpha/beta chains family. In terms of assembly, F-type ATPases have 2 components, CF(1) - the catalytic core - and CF(0) - the membrane proton channel. CF(1) has five subunits: alpha(3), beta(3), gamma(1), delta(1), epsilon(1). CF(0) has three main subunits: a(1), b(2) and c(9-12). The alpha and beta chains form an alternating ring which encloses part of the gamma chain. CF(1) is attached to CF(0) by a central stalk formed by the gamma and epsilon chains, while a peripheral stalk is formed by the delta and b chains.

The protein resides in the cell membrane. The enzyme catalyses ATP + H2O + 4 H(+)(in) = ADP + phosphate + 5 H(+)(out). Its function is as follows. Produces ATP from ADP in the presence of a proton gradient across the membrane. The catalytic sites are hosted primarily by the beta subunits. In Clostridium kluyveri (strain ATCC 8527 / DSM 555 / NBRC 12016 / NCIMB 10680 / K1), this protein is ATP synthase subunit beta.